A 184-amino-acid chain; its full sequence is LPS-assembly lipoprotein LptE (184 aa).

An N-terminal signal peptide occupies residues 1–19; that stretch reads MRHRLFTLVLGLAVLITAG. Cys-20 is lipidated: N-palmitoyl cysteine. Residue Cys-20 is the site of S-diacylglycerol cysteine attachment.

The protein belongs to the LptE lipoprotein family. Component of the lipopolysaccharide transport and assembly complex. Interacts with LptD.

The protein localises to the cell outer membrane. Together with LptD, is involved in the assembly of lipopolysaccharide (LPS) at the surface of the outer membrane. Required for the proper assembly of LptD. Binds LPS and may serve as the LPS recognition site at the outer membrane. The chain is LPS-assembly lipoprotein LptE from Pectobacterium atrosepticum (strain SCRI 1043 / ATCC BAA-672) (Erwinia carotovora subsp. atroseptica).